The primary structure comprises 843 residues: Protein P (843 aa).

Residues 1–177 (MPLSYQHFRK…FCGSPYSWEQ (177 aa)) are terminal protein domain (TP). A spacer region spans residues 178–346 (ELQHGRLVFQ…YCLTHIVNLL (169 aa)). The interval 347–690 (EDWGPCTEHG…YLHLYPVARQ (344 aa)) is polymerase/reverse transcriptase domain (RT). The Reverse transcriptase domain occupies 357-600 (EHNIRIPRTP…YSLNFMGYVI (244 aa)). Mg(2+) is bound by residues aspartate 429, aspartate 551, and aspartate 552.

The protein belongs to the hepadnaviridae P protein family.

It catalyses the reaction DNA(n) + a 2'-deoxyribonucleoside 5'-triphosphate = DNA(n+1) + diphosphate. The enzyme catalyses Endonucleolytic cleavage to 5'-phosphomonoester.. Its activity is regulated as follows. Activated by host HSP70 and HSP40 in vitro to be able to bind the epsilon loop of the pgRNA. Because deletion of the RNase H region renders the protein partly chaperone-independent, the chaperones may be needed indirectly to relieve occlusion of the RNA-binding site by this domain. Inhibited by several reverse-transcriptase inhibitors: Lamivudine, Adefovir and Entecavir. In terms of biological role, multifunctional enzyme that converts the viral RNA genome into dsDNA in viral cytoplasmic capsids. This enzyme displays a DNA polymerase activity that can copy either DNA or RNA templates, and a ribonuclease H (RNase H) activity that cleaves the RNA strand of RNA-DNA heteroduplexes in a partially processive 3'- to 5'-endonucleasic mode. Neo-synthesized pregenomic RNA (pgRNA) are encapsidated together with the P protein, and reverse-transcribed inside the nucleocapsid. Initiation of reverse-transcription occurs first by binding the epsilon loop on the pgRNA genome, and is initiated by protein priming, thereby the 5'-end of (-)DNA is covalently linked to P protein. Partial (+)DNA is synthesized from the (-)DNA template and generates the relaxed circular DNA (RC-DNA) genome. After budding and infection, the RC-DNA migrates in the nucleus, and is converted into a plasmid-like covalently closed circular DNA (cccDNA). The activity of P protein does not seem to be necessary for cccDNA generation, and is presumably released from (+)DNA by host nuclear DNA repair machinery. The polypeptide is Protein P (Hepatitis B virus genotype C subtype adr (isolate Japan/Nishioka/1983) (HBV-C)).